The primary structure comprises 380 residues: tRNA-specific 2-thiouridylase MnmA (380 aa).

Residues 25–32 and methionine 51 each bind ATP; that span reads AMSGGVDS. Cysteine 119 acts as the Nucleophile in catalysis. An intrachain disulfide couples cysteine 119 to cysteine 216. Glycine 143 serves as a coordination point for ATP. The interaction with tRNA stretch occupies residues 166–168; it reads KDQ. Catalysis depends on cysteine 216, which acts as the Cysteine persulfide intermediate. The interaction with tRNA stretch occupies residues 320–321; the sequence is RY.

Belongs to the MnmA/TRMU family.

The protein resides in the cytoplasm. The enzyme catalyses S-sulfanyl-L-cysteinyl-[protein] + uridine(34) in tRNA + AH2 + ATP = 2-thiouridine(34) in tRNA + L-cysteinyl-[protein] + A + AMP + diphosphate + H(+). Functionally, catalyzes the 2-thiolation of uridine at the wobble position (U34) of tRNA, leading to the formation of s(2)U34. This is tRNA-specific 2-thiouridylase MnmA from Deinococcus radiodurans (strain ATCC 13939 / DSM 20539 / JCM 16871 / CCUG 27074 / LMG 4051 / NBRC 15346 / NCIMB 9279 / VKM B-1422 / R1).